Consider the following 414-residue polypeptide: Multifunctional CCA protein (414 aa).

The ATP site is built by G8 and R11. 2 residues coordinate CTP: G8 and R11. Residues D21 and D23 each coordinate Mg(2+). The ATP site is built by R91, R137, and R140. 3 residues coordinate CTP: R91, R137, and R140. Residues 228–329 (TGIHTLLTLA…LKLLDTIDVW (102 aa)) enclose the HD domain.

This sequence belongs to the tRNA nucleotidyltransferase/poly(A) polymerase family. Bacterial CCA-adding enzyme type 1 subfamily. In terms of assembly, monomer. Can also form homodimers and oligomers. Mg(2+) is required as a cofactor. Ni(2+) serves as cofactor.

The enzyme catalyses a tRNA precursor + 2 CTP + ATP = a tRNA with a 3' CCA end + 3 diphosphate. The catalysed reaction is a tRNA with a 3' CCA end + 2 CTP + ATP = a tRNA with a 3' CCACCA end + 3 diphosphate. Its function is as follows. Catalyzes the addition and repair of the essential 3'-terminal CCA sequence in tRNAs without using a nucleic acid template. Adds these three nucleotides in the order of C, C, and A to the tRNA nucleotide-73, using CTP and ATP as substrates and producing inorganic pyrophosphate. tRNA 3'-terminal CCA addition is required both for tRNA processing and repair. Also involved in tRNA surveillance by mediating tandem CCA addition to generate a CCACCA at the 3' terminus of unstable tRNAs. While stable tRNAs receive only 3'-terminal CCA, unstable tRNAs are marked with CCACCA and rapidly degraded. This chain is Multifunctional CCA protein, found in Edwardsiella ictaluri (strain 93-146).